The chain runs to 668 residues: Bifunctional polymyxin resistance protein ArnA (668 aa).

The formyltransferase ArnAFT stretch occupies residues 1 to 307; sequence MSAKTVVFAY…ELGLVDGSLL (307 aa). The active-site Proton donor; for formyltransferase activity is the His106. Residues Arg116 and 138-142 each bind (6R)-10-formyltetrahydrofolate; that span reads VKRAD. The tract at residues 317-668 is dehydrogenase ArnADH; the sequence is RRTRVLILGV…IERPSNKEAC (352 aa). NAD(+) contacts are provided by residues Asp350 and 371 to 372; that span reads DI. UDP-alpha-D-glucuronate is bound by residues Ala396, Tyr401, and 435–436; that span reads TS. The Proton acceptor; for decarboxylase activity role is filled by Glu437. UDP-alpha-D-glucuronate-binding positions include Arg463, Asn494, 528-537, and Tyr615; that span reads RLFDGGEQKR. The active-site Proton donor; for decarboxylase activity is the Arg621.

In the N-terminal section; belongs to the Fmt family. UDP-L-Ara4N formyltransferase subfamily. This sequence in the C-terminal section; belongs to the NAD(P)-dependent epimerase/dehydratase family. UDP-glucuronic acid decarboxylase subfamily. As to quaternary structure, homohexamer, formed by a dimer of trimers.

It catalyses the reaction UDP-alpha-D-glucuronate + NAD(+) = UDP-beta-L-threo-pentopyranos-4-ulose + CO2 + NADH. The catalysed reaction is UDP-4-amino-4-deoxy-beta-L-arabinose + (6R)-10-formyltetrahydrofolate = UDP-4-deoxy-4-formamido-beta-L-arabinose + (6S)-5,6,7,8-tetrahydrofolate + H(+). It participates in nucleotide-sugar biosynthesis; UDP-4-deoxy-4-formamido-beta-L-arabinose biosynthesis; UDP-4-deoxy-4-formamido-beta-L-arabinose from UDP-alpha-D-glucuronate: step 1/3. The protein operates within nucleotide-sugar biosynthesis; UDP-4-deoxy-4-formamido-beta-L-arabinose biosynthesis; UDP-4-deoxy-4-formamido-beta-L-arabinose from UDP-alpha-D-glucuronate: step 3/3. Its pathway is bacterial outer membrane biogenesis; lipopolysaccharide biosynthesis. Functionally, bifunctional enzyme that catalyzes the oxidative decarboxylation of UDP-glucuronic acid (UDP-GlcUA) to UDP-4-keto-arabinose (UDP-Ara4O) and the addition of a formyl group to UDP-4-amino-4-deoxy-L-arabinose (UDP-L-Ara4N) to form UDP-L-4-formamido-arabinose (UDP-L-Ara4FN). The modified arabinose is attached to lipid A and is required for resistance to polymyxin and cationic antimicrobial peptides. The chain is Bifunctional polymyxin resistance protein ArnA from Pseudomonas fluorescens (strain Pf0-1).